Reading from the N-terminus, the 638-residue chain is Adhesion G-protein coupled receptor F2 (638 aa).

The signal sequence occupies residues 1 to 25 (MISARWLYCLVLLLATESCRLFCQA). Residues 26-386 (ASKSKENVMP…ESPVLTYITY (361 aa)) lie on the Extracellular side of the membrane. Residues asparagine 155, asparagine 219, asparagine 248, asparagine 293, and asparagine 311 are each glycosylated (N-linked (GlcNAc...) asparagine). Residues 233 to 377 (PRNSLGKNFT…SILMSPNTVE (145 aa)) enclose the GAIN-B domain. Cystine bridges form between cysteine 329-cysteine 356 and cysteine 344-cysteine 358. Positions 329-377 (CVGWHSLESRWDRRACKMIQENSRQAICRCQPNKFFTSFSILMSPNTVE) are GPS. A helical transmembrane segment spans residues 387 to 407 (IGLGISICSLIICLAIEALVW). Residues 408-422 (SQVTKTEISYLRHLC) lie on the Cytoplasmic side of the membrane. A helical membrane pass occupies residues 423–443 (IANIAVTLLMADVWFIVASFL). Topologically, residues 444–465 (SGPIVHHNGCVTATFFVHFFYL) are extracellular. The chain crosses the membrane as a helical span at residues 466–486 (SVFFWMLAKALLILYGILIVF). Topologically, residues 487–493 (HTLPKSC) are cytoplasmic. Residues 494-514 (LVASLFTVGYGCPLVIAVITL) traverse the membrane as a helical segment. Residues 515–541 (AVTEPGKGYLRPEACWLNWDMTKALLA) are Extracellular-facing. Residues 542 to 562 (FVVPALAIVVVNLITVTLVII) form a helical membrane-spanning segment. Residues 563–586 (KTQRAAVGSSMFQEVRAIVRICKN) are Cytoplasmic-facing. The helical transmembrane segment at 587–607 (IAILTPLLGLTWGFGIATVVA) threads the bilayer. Over 608-610 (GHS) the chain is Extracellular. Residues 611–631 (LAFHIIFSLLNALQVSPDAMI) traverse the membrane as a helical segment. The Cytoplasmic portion of the chain corresponds to 632-638 (ESEWRGC).

It belongs to the G-protein coupled receptor 2 family. Adhesion G-protein coupled receptor (ADGR) subfamily.

The protein resides in the membrane. Functionally, orphan receptor. The sequence is that of Adhesion G-protein coupled receptor F2 (Adgrf2) from Rattus norvegicus (Rat).